We begin with the raw amino-acid sequence, 368 residues long: Transcription factor bHLH30 (368 aa).

Positions Ala3–Phe30 form a coiled coil. The bHLH domain occupies Ala173 to Leu222. The segment at Lys333–Arg368 is disordered. Residues Glu337–Arg368 show a composition bias toward polar residues.

In terms of assembly, homodimer. Interacts with LHW.

The protein resides in the nucleus. This chain is Transcription factor bHLH30 (BHLH30), found in Arabidopsis thaliana (Mouse-ear cress).